A 289-amino-acid polypeptide reads, in one-letter code: Urease accessory protein UreD (289 aa).

It belongs to the UreD family. UreD, UreF and UreG form a complex that acts as a GTP-hydrolysis-dependent molecular chaperone, activating the urease apoprotein by helping to assemble the nickel containing metallocenter of UreC. The UreE protein probably delivers the nickel.

It is found in the cytoplasm. Required for maturation of urease via the functional incorporation of the urease nickel metallocenter. This chain is Urease accessory protein UreD, found in Cupriavidus necator (strain ATCC 17699 / DSM 428 / KCTC 22496 / NCIMB 10442 / H16 / Stanier 337) (Ralstonia eutropha).